Consider the following 176-residue polypeptide: 3-hydroxyanthranilate 3,4-dioxygenase (176 aa).

Residue Arg44 coordinates O2. Residues His48, Glu54, and His92 each coordinate Fe cation. Residue Glu54 coordinates substrate. The substrate site is built by Arg96 and Glu106. Cys121, Cys124, Cys158, and Cys161 together coordinate Fe cation.

Belongs to the 3-HAO family. Homodimer. Fe(2+) is required as a cofactor.

It catalyses the reaction 3-hydroxyanthranilate + O2 = (2Z,4Z)-2-amino-3-carboxymuconate 6-semialdehyde. Its pathway is cofactor biosynthesis; NAD(+) biosynthesis; quinolinate from L-kynurenine: step 3/3. Functionally, catalyzes the oxidative ring opening of 3-hydroxyanthranilate to 2-amino-3-carboxymuconate semialdehyde, which spontaneously cyclizes to quinolinate. The protein is 3-hydroxyanthranilate 3,4-dioxygenase of Xanthomonas campestris pv. campestris (strain 8004).